The following is a 1191-amino-acid chain: Major DNA-binding protein (1191 aa).

Residues 820 to 821 carry the Required for filament formation motif; that stretch reads FW. Disordered stretches follow at residues 1122 to 1146 and 1168 to 1191; these read TAAG…AADE and AGLI…RSRL. A compositionally biased stretch (gly residues) spans 1127–1142; it reads AAGGGGSATEGGGGGA. The interval 1173 to 1191 is required for nuclear localization; that stretch reads GDDVRGDDEFELPSKRSRL.

It belongs to the herpesviridae major DNA-binding protein family. In terms of assembly, homooligomers. Forms double-helical filaments necessary for the formation of replication compartments within the host nucleus. Interacts with the origin-binding protein. Interacts with the helicase primase complex; this interaction stimulates primer synthesis activity of the helicase-primase complex. Interacts with the DNA polymerase. Interacts with the alkaline exonuclease; this interaction increases its nuclease processivity.

The protein localises to the host nucleus. Its function is as follows. Single-stranded DNA-binding protein required for DNA replication. Functionally, plays several crucial roles in viral infection. Participates in the opening of the viral DNA origin to initiate replication by interacting with the origin-binding protein. May disrupt loops, hairpins and other secondary structures present on ssDNA to reduce and eliminate pausing of viral DNA polymerase at specific sites during elongation. Promotes viral DNA recombination by performing strand-transfer, characterized by the ability to transfer a DNA strand from a linear duplex to a complementary single-stranded DNA circle. Can also catalyze the renaturation of complementary single strands. Additionally, reorganizes the host cell nucleus, leading to the formation of prereplicative sites and replication compartments. This process is driven by the protein which can form double-helical filaments in the absence of DNA. This Mus musculus (Mouse) protein is Major DNA-binding protein.